The following is a 623-amino-acid chain: Set1/Ash2 histone methyltransferase complex subunit ASH2 (623 aa).

Positions 1–18 are enriched in gly residues; sequence MAAAGAGPGPGVSAGPGP. Residues 1 to 62 form a PHD-type; atypical zinc finger; that stretch reads MAAAGAGPGP…SGEAESGDAN (62 aa). The disordered stretch occupies residues 1–99; the sequence is MAAAGAGPGP…MDTQAGSVDE (99 aa). A compositionally biased stretch (low complexity) spans 36 to 56; that stretch reads AAGAGEGPSAAPGAEPSSGEA. Residues 63–172 are DNA-binding; the sequence is LVDVSGLETE…MCLSALANLT (110 aa). Residues 84 to 95 are compositionally biased toward polar residues; the sequence is GDTSEVMDTQAG. A Phosphoserine modification is found at S96. The C4-type zinc finger occupies 112–145; sequence CGICTKWFTADTFGIDTSSCLPFMTNYSFHCNVC. Over residues 230–247 the composition is skewed to basic and acidic residues; it reads LVKEHPDPGSKDPEEDYP. Positions 230–326 are disordered; the sequence is LVKEHPDPGS…AQRLPPHGYP (97 aa). Positions 265 to 277 are enriched in polar residues; that stretch reads NQKQSSAVSASGN. Over residues 278-290 the composition is skewed to gly residues; the sequence is LNGGIAAGSSGKG. At R291 the chain carries Asymmetric dimethylarginine; by PRMT1 and PRMT5. Residue S311 is modified to Phosphoserine. Positions 311 to 623 are interaction with RBBP5; that stretch reads SDPLFSAQRL…DGRRSPPWEP (313 aa). The 224-residue stretch at 355–578 folds into the B30.2/SPRY domain; the sequence is LDCWAGKPIP…VSINFGPSFK (224 aa).

In terms of assembly, interacts with HCFC1. Core component of several methyltransferase-containing complexes including MLL1/MLL, MLL2/3 (also named ASCOM complex) and MLL4/WBP7. Each complex is at least composed of ASH2L, RBBP5, WDR5, DPY30, one or more specific histone methyltransferases (KMT2A/MLL1, KMT2D/MLL2, KMT2C/MLL3 and KMT2B/MLL4), and the facultative components PAGR1, BACC1, CHD8, E2F6, HCFC1, HCFC2, HSP70, INO80C, KDM6A, KANSL1, LAS1L, MAX, MCRS1, MEN1, MGA, KAT8/MOF, NCOA6, PAXIP1/PTIP, PELP1, PHF20, PRP31, RING2, RUVB1/TIP49A, RUVB2/TIP49B, SENP3, TAF1, TAF4, TAF6, TAF7, TAF9, TEX10 and alpha- and beta-tubulin. Component of the SET1 complex, at least composed of the catalytic subunit (SETD1A or SETD1B), WDR5, WDR82, RBBP5, ASH2L/ASH2, CXXC1/CFP1, HCFC1 and DPY30. Found in a complex with RBBP5, ASH2L, DPY30, KMT2A, KMT2D and WDR5. Component of a histone methylation complex composed of at least ZNF335, RBBP5, ASH2L and WDR5; the complex may have histone H3-specific methyltransferase activity, however does not have specificity for 'Lys-4' of histone H3. Within the complex, interacts with ZNF335. Interacts with RBBP5. Components of this complex may associate with components of a nuclear receptor-mediated transcription complex to form a complex at least composed of ZNF335, HCFC1, CCAR2, EMSY, MKI67, RBBP5, ASH2L and WDR5. Within this complex also interacts with CCAR2 and EMSY. Interacts with DPY30. Interacts with SETD1A and SETD1B. In terms of processing, both monomethylated and dimethylated on arginine residues in the C-terminus. Arg-291 is the major site. Methylation is not required for nuclear localization, nor for MLL complex integrity or maintenance of global histone H3K4me3 levels. Ubiquitously expressed, with abundant expression in the heart, skeletal muscle and kidney. Low expression is seen in spleen, lung and testis.

It is found in the nucleus. Transcriptional regulator. Component or associated component of some histone methyltransferase complexes which regulates transcription through recruitment of those complexes to gene promoters. Component of the Set1/Ash2 histone methyltransferase (HMT) complex, a complex that specifically methylates 'Lys-4' of histone H3, but not if the neighboring 'Lys-9' residue is already methylated. As part of the MLL1/MLL complex it is involved in methylation and dimethylation at 'Lys-4' of histone H3. May play a role in hematopoiesis. In association with RBBP5 and WDR5, stimulates the histone methyltransferase activities of KMT2A, KMT2B, KMT2C, KMT2D, SETD1A and SETD1B. The protein is Set1/Ash2 histone methyltransferase complex subunit ASH2 (Ash2l) of Mus musculus (Mouse).